A 438-amino-acid polypeptide reads, in one-letter code: UPF0597 protein YE0448 (438 aa).

Belongs to the UPF0597 family.

This Yersinia enterocolitica serotype O:8 / biotype 1B (strain NCTC 13174 / 8081) protein is UPF0597 protein YE0448.